A 248-amino-acid chain; its full sequence is Meiotically up-regulated gene 65 protein (248 aa).

Its function is as follows. Has a role in meiosis. In Schizosaccharomyces pombe (strain 972 / ATCC 24843) (Fission yeast), this protein is Meiotically up-regulated gene 65 protein (mug65).